We begin with the raw amino-acid sequence, 657 residues long: Protein mono-ADP-ribosyltransferase TIPARP (657 aa).

A compositionally biased stretch (acidic residues) spans 1 to 10 (MEMETTEPEP). The tract at residues 1 to 21 (MEMETTEPEPDCVVQPPSPPD) is disordered. Residue Cys-39 is modified to ADP-ribosylcysteine. Residues 41–47 (KKKDQKR) carry the Nuclear localization signal motif. The segment at 237–264 (ENGIEICMDFLQGTCIYGRDCLKHHTVL) adopts a C3H1-type zinc-finger fold. The WWE domain maps to 332–410 (STPPSSNVNS…RRPLFRSCFI (79 aa)). Positions 449-657 (YPETWVYMHP…YEEVSNTVSI (209 aa)) constitute a PARP catalytic domain.

The protein belongs to the ARTD/PARP family. In terms of assembly, interacts with AHR. Auto-mono-ADP-ribosylated.

It localises to the nucleus. It catalyses the reaction L-aspartyl-[protein] + NAD(+) = 4-O-(ADP-D-ribosyl)-L-aspartyl-[protein] + nicotinamide. It carries out the reaction L-glutamyl-[protein] + NAD(+) = 5-O-(ADP-D-ribosyl)-L-glutamyl-[protein] + nicotinamide. The catalysed reaction is L-cysteinyl-[protein] + NAD(+) = S-(ADP-D-ribosyl)-L-cysteinyl-[protein] + nicotinamide + H(+). With respect to regulation, ADP-ribosyltransferase activity is inhibited by PJ34; inhibition is however not specific to TIPARP and other PARP-domain containing proteins are also inhibited by PJ34. Partially inhibited by KU0058948. Functionally, ADP-ribosyltransferase that mediates mono-ADP-ribosylation of glutamate, aspartate and cysteine residues on target proteins. Acts as a negative regulator of AHR by mediating mono-ADP-ribosylation of AHR, leading to inhibit transcription activator activity of AHR. The polypeptide is Protein mono-ADP-ribosyltransferase TIPARP (Homo sapiens (Human)).